The sequence spans 511 residues: Type 2 DNA topoisomerase 6 subunit B-like (511 aa).

Residues 398–485 form a disordered region; it reads DSAQGTEDAP…RALAPGRASL (88 aa). The span at 408–422 shows a compositional bias: polar residues; sequence DNSSLELLADTSGQA. Low complexity predominate over residues 440 to 451; it reads LRSARAPSPSEA. The span at 466–475 shows a compositional bias: basic and acidic residues; sequence RGREHREAHG.

The protein belongs to the TOP6B-like family. As to quaternary structure, heterotetramer of SPO11 and 2 TOP6BL chains. Interacts with SPO11. In terms of tissue distribution, detected in lung, spleen,colon and in skeletal muscle. Expressed in the ovaries, Fallopian tubes and uterus.

The protein resides in the chromosome. Component of a topoisomerase 6 complex specifically required for meiotic recombination. Together with SPO11, mediates DNA cleavage that forms the double-strand breaks (DSB) that initiate meiotic recombination. The complex promotes relaxation of negative and positive supercoiled DNA and DNA decatenation through cleavage and ligation cycles. This Homo sapiens (Human) protein is Type 2 DNA topoisomerase 6 subunit B-like.